Consider the following 431-residue polypeptide: Serine--tRNA ligase (431 aa).

235–237 serves as a coordination point for L-serine; it reads TAE. ATP is bound by residues 266 to 268 and Val-282; that span reads RRE. Residue Glu-289 participates in L-serine binding. 353–356 contributes to the ATP binding site; the sequence is EASS. L-serine is bound at residue Ser-389.

Belongs to the class-II aminoacyl-tRNA synthetase family. Type-1 seryl-tRNA synthetase subfamily. Homodimer. The tRNA molecule binds across the dimer.

The protein resides in the cytoplasm. The enzyme catalyses tRNA(Ser) + L-serine + ATP = L-seryl-tRNA(Ser) + AMP + diphosphate + H(+). It catalyses the reaction tRNA(Sec) + L-serine + ATP = L-seryl-tRNA(Sec) + AMP + diphosphate + H(+). Its pathway is aminoacyl-tRNA biosynthesis; selenocysteinyl-tRNA(Sec) biosynthesis; L-seryl-tRNA(Sec) from L-serine and tRNA(Sec): step 1/1. Functionally, catalyzes the attachment of serine to tRNA(Ser). Is also able to aminoacylate tRNA(Sec) with serine, to form the misacylated tRNA L-seryl-tRNA(Sec), which will be further converted into selenocysteinyl-tRNA(Sec). This chain is Serine--tRNA ligase, found in Prosthecochloris aestuarii (strain DSM 271 / SK 413).